The primary structure comprises 541 residues: Glutamyl-tRNA(Gln) amidotransferase subunit B, mitochondrial (541 aa).

The protein belongs to the GatB/GatE family. GatB subfamily. As to quaternary structure, subunit of the heterotrimeric GatFAB amidotransferase (AdT) complex, composed of A, B and F subunits.

It is found in the mitochondrion. It catalyses the reaction L-glutamyl-tRNA(Gln) + L-glutamine + ATP + H2O = L-glutaminyl-tRNA(Gln) + L-glutamate + ADP + phosphate + H(+). Allows the formation of correctly charged Gln-tRNA(Gln) through the transamidation of misacylated Glu-tRNA(Gln) in the mitochondria. The reaction takes place in the presence of glutamine and ATP through an activated gamma-phospho-Glu-tRNA(Gln). In Saccharomyces cerevisiae (strain YJM789) (Baker's yeast), this protein is Glutamyl-tRNA(Gln) amidotransferase subunit B, mitochondrial.